We begin with the raw amino-acid sequence, 136 residues long: Gonadotropin subunit beta-2 (136 aa).

The signal sequence occupies residues Met1–Ala21. Cystine bridges form between Cys27/Cys75, Cys41/Cys90, Cys44/Cys128, Cys52/Cys106, Cys56/Cys108, and Cys111/Cys118. N-linked (GlcNAc...) asparagine glycosylation is present at Asn31.

The protein belongs to the glycoprotein hormones subunit beta family. As to quaternary structure, heterodimer of an alpha and a beta chain.

The protein resides in the secreted. Its function is as follows. Involved in gametogenesis and steroidogenesis. The protein is Gonadotropin subunit beta-2 (cgbb) of Fundulus heteroclitus (Killifish).